Reading from the N-terminus, the 155-residue chain is Probable Brix domain-containing ribosomal biogenesis protein (155 aa).

The Brix domain occupies 1–155; the sequence is MLLTTSRKPS…LLIRDFRVGE (155 aa).

In terms of biological role, probably involved in the biogenesis of the ribosome. This chain is Probable Brix domain-containing ribosomal biogenesis protein, found in Methanothermobacter thermautotrophicus (strain ATCC 29096 / DSM 1053 / JCM 10044 / NBRC 100330 / Delta H) (Methanobacterium thermoautotrophicum).